Consider the following 532-residue polypeptide: Pre-piRNA 3'-exonuclease trimmer (532 aa).

Asp28, Glu30, Asp270, and Asp365 together coordinate Mg(2+). The helical transmembrane segment at 503 to 523 (AGRFAIWSGSIVTGGLALYLI) threads the bilayer.

Belongs to the CAF1 family. Interacts with Papi/Tdrkh; interaction takes place on the mitochondrial surface and recruits PNLDC1/trimmer to PIWI-bound pre-piRNAs. Requires Mg(2+) as cofactor.

The protein resides in the mitochondrion outer membrane. In terms of biological role, 3'-5' exonuclease that specifically cleaves precursor piRNAs (pre-piRNAs) at their 3' ends. Trims pre-piRNAs to their mature size, a process required for piRNAs maturation and stabilization, and subsequent pre-piRNAs 2'-O-methylation. The piRNA metabolic process mediates the repression of transposable elements during meiosis by forming complexes composed of piRNAs and Piwi proteins and govern the methylation and subsequent repression of transposons. The sequence is that of Pre-piRNA 3'-exonuclease trimmer from Bombyx mori (Silk moth).